Here is a 335-residue protein sequence, read N- to C-terminus: Vitamin B12 import system permease protein BtuC (335 aa).

The next 9 membrane-spanning stretches (helical) occupy residues 22 to 42, 67 to 87, 94 to 114, 117 to 137, 153 to 173, 200 to 220, 243 to 263, 281 to 301, and 308 to 328; these read LLLLTLGVAVAFVFSLSAGDV, LAVMLVGASLAVAGAVMQSLF, PGLLGVANGAGVALVLTVLLG, LLPVAFMSLSAIAGALVMTFL, LLVGVALGIVCSAVMTWAVYF, LVLALLPVLLWLCCQGKALNF, VLAIGWLVGVSVALAGVIGFV, YLLPGCALAGAGVLLAADVVA, and AELPIGVVTATLGAPLFIWLL.

Belongs to the binding-protein-dependent transport system permease family. FecCD subfamily. As to quaternary structure, the complex is composed of two ATP-binding proteins (BtuD), two transmembrane proteins (BtuC) and a solute-binding protein (BtuF).

It localises to the cell inner membrane. Part of the ABC transporter complex BtuCDF involved in vitamin B12 import. Involved in the translocation of the substrate across the membrane. This is Vitamin B12 import system permease protein BtuC from Serratia proteamaculans (strain 568).